The sequence spans 373 residues: Dimethylallyltryptophan synthase CymD (373 aa).

L-tryptophan is bound by residues D55, V56, and E64. E64 acts as the Nucleophile in catalysis. Dimethylallyl diphosphate-binding residues include Q77, K146, W148, R205, and K207. Residue R211 coordinates L-tryptophan. Y274 contacts dimethylallyl diphosphate. Y326 contributes to the L-tryptophan binding site. The dimethylallyl diphosphate site is built by R337, K339, and Y341. The 28-residue stretch at 346-373 (MHDVTPPPLGVSQQHHLSGQTTARGRTE) folds into the FtsK domain.

In terms of biological role, dimethylallyltryptophan synthase; part of the gene cluster that mediates the biosynthesis of cyclic heptapeptides, known as cyclomarins and also of cyclic dipeptides, called cyclomarazines, which have both antimicrobial and cytotoxic effects. Catalyzes the reverse N-prenylation of monomeric L-tryptophan with dimethylallyl diphosphate (DMAPP) to form N-(1,1-dimethylallyl)-tryptophan (r-N-DMAT). The formation of r-N-DMAT appears to proceed via the deprotonation of the indole nitrogen of tryptophan, which facilitates a nucleophilic attack on the carbocation that is forming on the dimethylallyl group as the diphosphate dissociates. The N-(1,1-dimethylallyl)-tryptophan produced by CymD is combined with a range of standard and nonproteinogenic amino acid substrates to synthesize the peptides, a process that is probably catalyzed by the non-canonical nonribosomal peptide synthetase (NRPS), CymA. Other proteins in the cluster catalyze further modifications of the peptides including CymV which catalyzes the oxidation of olefinic cyclomarins and cyclomarazines to their respective epoxide derivatives. Utilizes only DMAPP as the prenyl donor and has no requirement for divalent cations. This chain is Dimethylallyltryptophan synthase CymD, found in Salinispora arenicola (strain CNS-205).